Consider the following 261-residue polypeptide: Arcelin-5A (261 aa).

An N-terminal signal peptide occupies residues 1–21 (MASSKLLSLALFLVLLTHANS). Asn-43, Asn-91, and Asn-100 each carry an N-linked (GlcNAc...) asparagine glycan. An intrachain disulfide couples Cys-167 to Cys-203. A propeptide spanning residues 255 to 261 (ILLNNIL) is cleaved from the precursor.

It belongs to the leguminous lectin family. As to quaternary structure, monomer. The C-terminal segment appears to be highly susceptible to proteolysis.

In terms of biological role, seed storage. This carbohydrate-binding lectin has toxic effects on bean bruchid pests. This Phaseolus vulgaris (Kidney bean) protein is Arcelin-5A (ARC5A).